We begin with the raw amino-acid sequence, 259 residues long: Thiazole synthase (259 aa).

Lys95 acts as the Schiff-base intermediate with DXP in catalysis. Residues Gly156, 182–183 (AG), and 204–205 (NT) contribute to the 1-deoxy-D-xylulose 5-phosphate site.

It belongs to the ThiG family. As to quaternary structure, homotetramer. Forms heterodimers with either ThiH or ThiS.

Its subcellular location is the cytoplasm. It carries out the reaction [ThiS sulfur-carrier protein]-C-terminal-Gly-aminoethanethioate + 2-iminoacetate + 1-deoxy-D-xylulose 5-phosphate = [ThiS sulfur-carrier protein]-C-terminal Gly-Gly + 2-[(2R,5Z)-2-carboxy-4-methylthiazol-5(2H)-ylidene]ethyl phosphate + 2 H2O + H(+). The protein operates within cofactor biosynthesis; thiamine diphosphate biosynthesis. In terms of biological role, catalyzes the rearrangement of 1-deoxy-D-xylulose 5-phosphate (DXP) to produce the thiazole phosphate moiety of thiamine. Sulfur is provided by the thiocarboxylate moiety of the carrier protein ThiS. In vitro, sulfur can be provided by H(2)S. The protein is Thiazole synthase of Serratia proteamaculans (strain 568).